The following is a 159-amino-acid chain: MVDEFTHLDNQGKARMVEINQKPDTSRRAVARGSIYMKANTLQKVKTNEMEKGDVLGVARVAAIMGTKRTGDLIPMCHPLMLTGIEVNFNFDEENCKIDIEVIVKTTGKTGVEMEALTGVSLAALTIYDMCKSIDKTMKIEHIRLAKKSGGQSGEIENE.

Substrate-binding positions include 76–78 (MCH) and 114–115 (ME). Asp129 is a catalytic residue.

This sequence belongs to the MoaC family. As to quaternary structure, homohexamer; trimer of dimers.

The enzyme catalyses (8S)-3',8-cyclo-7,8-dihydroguanosine 5'-triphosphate = cyclic pyranopterin phosphate + diphosphate. It participates in cofactor biosynthesis; molybdopterin biosynthesis. In terms of biological role, catalyzes the conversion of (8S)-3',8-cyclo-7,8-dihydroguanosine 5'-triphosphate to cyclic pyranopterin monophosphate (cPMP). The sequence is that of Cyclic pyranopterin monophosphate synthase from Natranaerobius thermophilus (strain ATCC BAA-1301 / DSM 18059 / JW/NM-WN-LF).